A 113-amino-acid chain; its full sequence is Hydrogenase maturation factor HybF (113 aa).

2 residues coordinate Ni(2+): H2 and E3. The Zn(2+) site is built by C73, C76, C89, and C92.

The protein belongs to the HypA/HybF family. HybF subfamily.

Involved in the maturation of [NiFe] hydrogenases. Required for nickel insertion into the metal center of the hydrogenase. This is Hydrogenase maturation factor HybF from Morganella morganii (Proteus morganii).